A 956-amino-acid chain; its full sequence is Golgin candidate 5 (956 aa).

Disordered stretches follow at residues 70–230 (MSFM…QHKI) and 278–298 (IFES…SSDE). Basic and acidic residues-rich tracts occupy residues 77-89 (SDEK…DSVR) and 118-129 (ANKETNVRREAD). Composition is skewed to polar residues over residues 160–177 (EYSL…SLQP) and 184–193 (TASQDSQPEQ). Basic and acidic residues predominate over residues 206–219 (SEAKEVTVENKDTV). A coiled-coil region spans residues 333–765 (SDSADVILEL…LIQKDLEREK (433 aa)). Ser793 bears the Phosphoserine mark. The stretch at 851–951 (SAYEATLRQK…EMYREQVNML (101 aa)) forms a coiled coil.

In terms of assembly, interacts with RABH1B and RABH1C, but not with RABD1 or RABD2A.

The protein localises to the golgi apparatus. It is found in the cytoplasm. In terms of biological role, golgi matrix protein playing a role in tethering of vesicles to Golgi membranes and in maintaining the overall structure of the Golgi apparatus. This is Golgin candidate 5 (GC5) from Arabidopsis thaliana (Mouse-ear cress).